Here is a 556-residue protein sequence, read N- to C-terminus: 2-succinyl-5-enolpyruvyl-6-hydroxy-3-cyclohexene-1-carboxylate synthase (556 aa).

The protein belongs to the TPP enzyme family. MenD subfamily. Homodimer. It depends on Mg(2+) as a cofactor. Mn(2+) serves as cofactor. Thiamine diphosphate is required as a cofactor.

It catalyses the reaction isochorismate + 2-oxoglutarate + H(+) = 5-enolpyruvoyl-6-hydroxy-2-succinyl-cyclohex-3-ene-1-carboxylate + CO2. It functions in the pathway quinol/quinone metabolism; 1,4-dihydroxy-2-naphthoate biosynthesis; 1,4-dihydroxy-2-naphthoate from chorismate: step 2/7. The protein operates within quinol/quinone metabolism; menaquinone biosynthesis. Functionally, catalyzes the thiamine diphosphate-dependent decarboxylation of 2-oxoglutarate and the subsequent addition of the resulting succinic semialdehyde-thiamine pyrophosphate anion to isochorismate to yield 2-succinyl-5-enolpyruvyl-6-hydroxy-3-cyclohexene-1-carboxylate (SEPHCHC). This is 2-succinyl-5-enolpyruvyl-6-hydroxy-3-cyclohexene-1-carboxylate synthase from Shigella sonnei (strain Ss046).